Consider the following 318-residue polypeptide: Acetyl-coenzyme A carboxylase carboxyl transferase subunit alpha (318 aa).

Residues 38 to 292 enclose the CoA carboxyltransferase C-terminal domain; sequence ALDRKAEEML…GEAIAAMLGE (255 aa).

It belongs to the AccA family. Acetyl-CoA carboxylase is a heterohexamer composed of biotin carboxyl carrier protein (AccB), biotin carboxylase (AccC) and two subunits each of ACCase subunit alpha (AccA) and ACCase subunit beta (AccD).

The protein localises to the cytoplasm. The catalysed reaction is N(6)-carboxybiotinyl-L-lysyl-[protein] + acetyl-CoA = N(6)-biotinyl-L-lysyl-[protein] + malonyl-CoA. The protein operates within lipid metabolism; malonyl-CoA biosynthesis; malonyl-CoA from acetyl-CoA: step 1/1. Functionally, component of the acetyl coenzyme A carboxylase (ACC) complex. First, biotin carboxylase catalyzes the carboxylation of biotin on its carrier protein (BCCP) and then the CO(2) group is transferred by the carboxyltransferase to acetyl-CoA to form malonyl-CoA. In Paracoccus denitrificans (strain Pd 1222), this protein is Acetyl-coenzyme A carboxylase carboxyl transferase subunit alpha.